The sequence spans 84 residues: Large ribosomal subunit protein bL27 (84 aa).

The segment at 1–22 (MAHKKAGGSTRNGRDSESKRLG) is disordered.

Belongs to the bacterial ribosomal protein bL27 family.

This is Large ribosomal subunit protein bL27 from Shewanella pealeana (strain ATCC 700345 / ANG-SQ1).